The sequence spans 102 residues: Large ribosomal subunit protein uL24 (102 aa).

It belongs to the universal ribosomal protein uL24 family. Part of the 50S ribosomal subunit.

In terms of biological role, one of two assembly initiator proteins, it binds directly to the 5'-end of the 23S rRNA, where it nucleates assembly of the 50S subunit. Its function is as follows. One of the proteins that surrounds the polypeptide exit tunnel on the outside of the subunit. The sequence is that of Large ribosomal subunit protein uL24 from Lysinibacillus sphaericus (strain C3-41).